We begin with the raw amino-acid sequence, 466 residues long: NADPH:adrenodoxin oxidoreductase, mitochondrial (466 aa).

The FAD site is built by Ala-40, Glu-61, Leu-69, and Leu-105. Residues 176-179 (QGNV), 220-221 (RR), and Glu-232 contribute to the NADP(+) site. Residues Trp-379 and 386 to 388 (GVI) contribute to the FAD site. An NADP(+)-binding site is contributed by Gly-386.

Belongs to the ferredoxin--NADP reductase type 1 family. It depends on FAD as a cofactor. Expressed predominantly in prothoracic gland of the larval ring gland and nurse cells of the adult ovary. Low expression is all adult tissues examined.

It localises to the mitochondrion inner membrane. It catalyses the reaction 2 reduced [adrenodoxin] + NADP(+) + H(+) = 2 oxidized [adrenodoxin] + NADPH. Its pathway is steroid metabolism; cholesterol metabolism. Functionally, required for synthesis of steroid hormones, for olfactory sensory behavior and completion of the second larval molt (a steroid mediated developmental transition) and pupariation. The sequence is that of NADPH:adrenodoxin oxidoreductase, mitochondrial (dare) from Drosophila melanogaster (Fruit fly).